An 85-amino-acid chain; its full sequence is Small ribosomal subunit protein uS17 (85 aa).

It belongs to the universal ribosomal protein uS17 family. Part of the 30S ribosomal subunit.

Functionally, one of the primary rRNA binding proteins, it binds specifically to the 5'-end of 16S ribosomal RNA. This is Small ribosomal subunit protein uS17 from Haemophilus influenzae (strain 86-028NP).